Reading from the N-terminus, the 281-residue chain is Fructose-bisphosphate aldolase class 1 (281 aa).

Lys-191 serves as the catalytic Schiff-base intermediate with dihydroxyacetone-P.

This sequence belongs to the DeoC/FbaB aldolase family. In terms of assembly, homooctamer.

It localises to the cytoplasm. The protein resides in the chromosome. The catalysed reaction is beta-D-fructose 1,6-bisphosphate = D-glyceraldehyde 3-phosphate + dihydroxyacetone phosphate. Its activity is regulated as follows. Activated by citrate. The chain is Fructose-bisphosphate aldolase class 1 (fba) from Thermococcus kodakarensis (strain ATCC BAA-918 / JCM 12380 / KOD1) (Pyrococcus kodakaraensis (strain KOD1)).